Reading from the N-terminus, the 433-residue chain is Urokinase-type plasminogen activator (433 aa).

A signal peptide spans 1–20 (MRALLAHLLLCVLVVSASKG). Positions 26–62 (VPSDCGCLNGGTCMSNKYFSSIHWCNCPKKFGGQHCE) constitute an EGF-like domain. Disulfide bonds link Cys30–Cys38, Cys32–Cys50, Cys52–Cys61, Cys69–Cys150, Cys90–Cys132, and Cys121–Cys145. Residues 33-56 (LNGGTCMSNKYFSSIHWCNCPKKF) are binds urokinase plasminogen activator surface receptor. Positions 69-150 (CYEGNGHFYR…RVQECMVHNC (82 aa)) constitute a Kringle domain. The tract at residues 151–177 (ADGKKPSSPPEELQFQCGQRTLRPRFK) is connecting peptide. At Ser157 the chain carries Phosphoserine. Cystine bridges form between Cys167–Cys298, Cys208–Cys224, Cys216–Cys287, Cys315–Cys384, Cys347–Cys363, and Cys374–Cys402. The Peptidase S1 domain maps to 178–426 (IVGGEFTTIE…FLPWIHSHTR (249 aa)). Catalysis depends on charge relay system residues His223 and Asp274. Asn324 is a glycosylation site (N-linked (GlcNAc...) asparagine). Ser325 is modified (phosphoserine). Catalysis depends on Ser378, which acts as the Charge relay system.

It belongs to the peptidase S1 family. In terms of assembly, found in high and low molecular mass forms. Each consists of two chains, A and B. The high molecular mass form contains a long chain A which is cleaved to yield a short chain A. Forms heterodimer with SERPINA5. Binds LRP1B; binding is followed by internalization and degradation. Interacts with MRC2. Interacts with PLAUR. In complex with SERPINE1, interacts with PLAUR/uPAR. Interacts with SORL1 and LRP1, either alone or in complex with SERPINE1; these interactions are abolished in the presence of LRPAP1/RAP. The ternary complex composed of PLAUR-PLAU-PAI1 also interacts with SORLA. In terms of processing, phosphorylation of Ser-157 and Ser-325 abolishes proadhesive ability but does not interfere with receptor binding. Produced as an inactive single-chain protein (pro-uPA or sc-uPA), is processed into the active disulfide-linked two-chain form of PLAU/uPA by a proteolytic event mediated, at least, by TMPRSS4.

Its subcellular location is the secreted. It carries out the reaction Specific cleavage of Arg-|-Val bond in plasminogen to form plasmin.. Its activity is regulated as follows. Inhibited by SERPINA5. Inhibited by SERPINE1. Its function is as follows. Specifically cleaves the zymogen plasminogen to form the active enzyme plasmin. The protein is Urokinase-type plasminogen activator (PLAU) of Papio cynocephalus (Yellow baboon).